Consider the following 138-residue polypeptide: Transcriptional activator protein Pur-alpha (138 aa).

Phosphoserine is present on serine 70.

Belongs to the PUR DNA-binding protein family. In terms of assembly, homodimer, heterodimer with PURB and heterotrimer with PURB and YBX1/Y-box protein 1. Interacts with FMR1; this interaction occurs in association with polyribosome.

It localises to the nucleus. This is a probable transcription activator that specifically binds the purine-rich single strand of the PUR element located upstream of the c-Myc gene. May play a role in the initiation of DNA replication and in recombination. This chain is Transcriptional activator protein Pur-alpha, found in Rattus norvegicus (Rat).